The chain runs to 92 residues: MKPIQKLLAGLILLTWCVEGCSSQHWSYGLRPGGKRDAENLIDSFQEIVKEVGQLAETQRFECTTHQPRSPLRDLKGALESLIEEETGQKKI.

Residues 1 to 23 (MKPIQKLLAGLILLTWCVEGCSS) form the signal peptide. Gln-24 is subject to Pyrrolidone carboxylic acid. Gly-33 carries the glycine amide modification.

This sequence belongs to the GnRH family. Post-translationally, the precursor is cleaved by ACE, which removes the Gly-Lys-Arg peptide at the C-terminus, leading to mature hormone. The mature form of Gonadoliberin-1 is also cleaved and degraded by ACE.

The protein resides in the secreted. In terms of biological role, stimulates the secretion of gonadotropins; it stimulates the secretion of both luteinizing and follicle-stimulating hormones. The sequence is that of Progonadoliberin-1 (GNRH1) from Homo sapiens (Human).